The following is a 295-amino-acid chain: sn-glycerol-3-phosphate transport system permease protein UgpA (295 aa).

Topologically, residues 1-11 are cytoplasmic; sequence MSSSRPVFRSR. A helical transmembrane segment spans residues 12 to 32; it reads WLPYLLVAPQLIITVIFFIWP. The Periplasmic segment spans residues 33 to 80; it reads AGEALWYSLQSVDPFGFSSRFVGLDNFVALFHDSYYIDSFWTTIKFST. One can recognise an ABC transmembrane type-1 domain in the interval 76 to 284; sequence IKFSTFVTVS…FLVIVLTVMQ (209 aa). Residues 81 to 101 traverse the membrane as a helical segment; that stretch reads FVTVSGLLVSLFFAALVEYIV. Residues 102-109 are Cytoplasmic-facing; that stretch reads RGSRFYQT. A helical transmembrane segment spans residues 110-130; the sequence is LMLLPYAVAPAVAAVLWIFLF. Residues 131–156 lie on the Periplasmic side of the membrane; that stretch reads NPGRGLITHFLAEFGYDWNHAQNSGQ. The chain crosses the membrane as a helical span at residues 157–177; it reads AMFLVVFASVWKQISYNFLFF. The Cytoplasmic segment spans residues 178–207; sequence YAALQSIPRSLIEAAAIDGAGPIRRFFKIA. Residues 208 to 228 form a helical membrane-spanning segment; it reads LPLIAPVSFFLLVVNLVYAFF. At 229–262 the chain is on the periplasmic side; it reads DTFPVIDAATSGGPVQATTTLIYKIYREGFTGLD. Residues 263-283 form a helical membrane-spanning segment; it reads LASSAAQSVVLMFLVIVLTVM. Topologically, residues 284–295 are cytoplasmic; that stretch reads QFRYVESKVRYQ.

Belongs to the binding-protein-dependent transport system permease family. UgpAE subfamily. The complex is composed of two ATP-binding proteins (UgpC), two transmembrane proteins (UgpA and UgpE) and a solute-binding protein (UgpB).

The protein resides in the cell inner membrane. Its function is as follows. Part of the ABC transporter complex UgpBAEC involved in sn-glycerol-3-phosphate (G3P) import. Probably responsible for the translocation of the substrate across the membrane. This Escherichia coli O157:H7 protein is sn-glycerol-3-phosphate transport system permease protein UgpA (ugpA).